The primary structure comprises 263 residues: Type III pantothenate kinase (263 aa).

ATP is bound at residue 14–21 (DIGNTSVN). 115–118 (GADR) provides a ligand contact to substrate. The active-site Proton acceptor is aspartate 117. Aspartate 137 is a binding site for K(+). Threonine 140 is a binding site for ATP. Threonine 192 contacts substrate.

The protein belongs to the type III pantothenate kinase family. As to quaternary structure, homodimer. NH4(+) serves as cofactor. Requires K(+) as cofactor.

The protein localises to the cytoplasm. The enzyme catalyses (R)-pantothenate + ATP = (R)-4'-phosphopantothenate + ADP + H(+). The protein operates within cofactor biosynthesis; coenzyme A biosynthesis; CoA from (R)-pantothenate: step 1/5. Functionally, catalyzes the phosphorylation of pantothenate (Pan), the first step in CoA biosynthesis. The sequence is that of Type III pantothenate kinase from Dehalococcoides mccartyi (strain CBDB1).